Here is a 358-residue protein sequence, read N- to C-terminus: MAAAAAAGPEMVRGQVFDVGPRYTNLSYIGEGAYGMVCSAYDNLNKVRVAIKKISPFEHQTYCQRTLREIKILLRFRHENIIGINDIIRAPTIEQMKDVYIVQDLMETDLYKLLKTQHLSNDHICYFLYQILRGLKYIHSANVLHRDLKPSNLLLNTTCDLKICDFGLARVADPDHDHTGFLTEYVATRWYRAPEIMLNSKGYTKSIDIWSVGCILAEMLSNRPIFPGKHYLDQLNHILGILGSPSQEDLNCIINLKARNYLLSLPHKNKVPWNRLFPNADSKALDLLDKMLTFNPHKRIEVEQALAHPYLEQYYDPSDEPIAEAPFKFDMELDDLPKEKLKELIFEETARFQPGYRS.

Ala2 is modified (N-acetylalanine). Residues 23–311 enclose the Protein kinase domain; it reads YTNLSYIGEG…VEQALAHPYL (289 aa). Ser27 is modified (phosphoserine; by SGK1). ATP-binding positions include 29-37 and Lys52; that span reads IGEGAYGMV. The Proton acceptor role is filled by Asp147. The residue at position 183 (Thr183) is a Phosphothreonine; by MAP2K1 and MAP2K2. Residues 183-185 carry the TXY motif; sequence TEY. A Phosphotyrosine; by MAP2K1 and MAP2K2 modification is found at Tyr185. The residue at position 188 (Thr188) is a Phosphothreonine; by autocatalysis. Phosphoserine is present on residues Ser244, Ser246, and Ser282.

It belongs to the protein kinase superfamily. CMGC Ser/Thr protein kinase family. MAP kinase subfamily. In terms of assembly, binds both upstream activators and downstream substrates in multimolecular complexes. This interaction inhibits its tyrosine-kinase activity. Interacts with ADAM15, ARHGEF2, ARRB2, DAPK1 (via death domain), HSF4, IER3, IPO7, NISCH, SGK1, and isoform 1 of NEK2. Interacts (via phosphorylated form) with TPR (via C-terminal region and phosphorylated form); the interaction requires dimerization of MAPK1/ERK2 and increases following EGF stimulation. Interacts with MAP2K1. Interacts with DUSP6. Interacts (phosphorylated form) with CAV2 ('Tyr-19'-phosphorylated form); the interaction, promoted by insulin, leads to nuclear location and MAPK1 activation. Interacts with DCC. Interacts with MORG1. Interacts with PEA15. Interacts with MKNK2. MKNK2 isoform 1 binding prevents from dephosphorylation and inactivation. The phosphorylated form interacts with PML. Interacts with STYX. Interacts with CDK2AP2. Interacts with CAVIN4. Interacts with DUSP7; the interaction enhances DUSP7 phosphatase activity. Interacts with GIT1; this interaction is necessary for MAPK1 localization to focal adhesions. Interacts with ZNF263. Interacts with phosphoglycerate kinase PGK1; the interaction is direct, occurs under hypoxic conditions, and promotes interaction between PGK1 and PIN1. The cofactor is Mg(2+). Post-translationally, dually phosphorylated on Thr-183 and Tyr-185, which activates the enzyme. Ligand-activated ALK induces tyrosine phosphorylation. Dephosphorylated by PTPRJ at Tyr-185. Phosphorylated upon FLT3 and KIT signaling. Dephosphorylated by DUSP1 and DUSP2 at Thr-183 and Tyr-185. ISGylated. In terms of processing, ubiquitinated by TRIM15 via 'Lys-63'-linked ubiquitination; leading to activation. Deubiquitinated by CYLD. As to expression, widely expressed.

The protein resides in the cytoplasm. Its subcellular location is the cytoskeleton. It localises to the spindle. It is found in the nucleus. The protein localises to the microtubule organizing center. The protein resides in the centrosome. Its subcellular location is the membrane. It localises to the caveola. It is found in the cell junction. The protein localises to the focal adhesion. It carries out the reaction L-seryl-[protein] + ATP = O-phospho-L-seryl-[protein] + ADP + H(+). The enzyme catalyses L-threonyl-[protein] + ATP = O-phospho-L-threonyl-[protein] + ADP + H(+). Phosphorylated by MAP2K1/MEK1 and MAP2K2/MEK2 on Thr-183 and Tyr-185 in response to external stimuli like insulin or NGF. Both phosphorylations are required for activity. This phosphorylation causes dramatic conformational changes, which enable full activation and interaction of MAPK1/ERK2 with its substrates. Phosphorylation on Ser-27 by SGK1 results in its activation by enhancing its interaction with MAP2K1/MEK1 and MAP2K2/MEK2. Dephosphorylated and inactivated by DUSP1, DUSP3, DUSP6 and DUSP9. Inactivated by pyrimidylpyrrole inhibitors. Its function is as follows. Serine/threonine kinase which acts as an essential component of the MAP kinase signal transduction pathway. MAPK1/ERK2 and MAPK3/ERK1 are the 2 MAPKs which play an important role in the MAPK/ERK cascade. They participate also in a signaling cascade initiated by activated KIT and KITLG/SCF. Depending on the cellular context, the MAPK/ERK cascade mediates diverse biological functions such as cell growth, adhesion, survival and differentiation through the regulation of transcription, translation, cytoskeletal rearrangements. The MAPK/ERK cascade also plays a role in initiation and regulation of meiosis, mitosis, and postmitotic functions in differentiated cells by phosphorylating a number of transcription factors. About 160 substrates have already been discovered for ERKs. Many of these substrates are localized in the nucleus, and seem to participate in the regulation of transcription upon stimulation. However, other substrates are found in the cytosol as well as in other cellular organelles, and those are responsible for processes such as translation, mitosis and apoptosis. Moreover, the MAPK/ERK cascade is also involved in the regulation of the endosomal dynamics, including lysosome processing and endosome cycling through the perinuclear recycling compartment (PNRC); as well as in the fragmentation of the Golgi apparatus during mitosis. The substrates include transcription factors (such as ATF2, BCL6, ELK1, ERF, FOS, HSF4 or SPZ1), cytoskeletal elements (such as CANX, CTTN, GJA1, MAP2, MAPT, PXN, SORBS3 or STMN1), regulators of apoptosis (such as BAD, BTG2, CASP9, DAPK1, IER3, MCL1 or PPARG), regulators of translation (such as EIF4EBP1 and FXR1) and a variety of other signaling-related molecules (like ARHGEF2, DCC, FRS2 or GRB10). Protein kinases (such as RAF1, RPS6KA1/RSK1, RPS6KA3/RSK2, RPS6KA2/RSK3, RPS6KA6/RSK4, SYK, MKNK1/MNK1, MKNK2/MNK2, RPS6KA5/MSK1, RPS6KA4/MSK2, MAPKAPK3 or MAPKAPK5) and phosphatases (such as DUSP1, DUSP4, DUSP6 or DUSP16) are other substrates which enable the propagation the MAPK/ERK signal to additional cytosolic and nuclear targets, thereby extending the specificity of the cascade. Mediates phosphorylation of TPR in response to EGF stimulation. May play a role in the spindle assembly checkpoint. Phosphorylates PML and promotes its interaction with PIN1, leading to PML degradation. Phosphorylates CDK2AP2. Phosphorylates phosphoglycerate kinase PGK1 under hypoxic conditions to promote its targeting to the mitochondrion and suppress the formation of acetyl-coenzyme A from pyruvate. Functionally, acts as a transcriptional repressor. Binds to a [GC]AAA[GC] consensus sequence. Repress the expression of interferon gamma-induced genes. Seems to bind to the promoter of CCL5, DMP1, IFIH1, IFITM1, IRF7, IRF9, LAMP3, OAS1, OAS2, OAS3 and STAT1. Transcriptional activity is independent of kinase activity. This Mus musculus (Mouse) protein is Mitogen-activated protein kinase 1.